We begin with the raw amino-acid sequence, 553 residues long: Protein PNS1 (553 aa).

Positions 1–53 are disordered; that stretch reads MFGEGNKPTEPVPAYDAGQDPFQGPNASKNQYQGSAADYNGAPPPPASQPGNQ. The Cytoplasmic segment spans residues 1–94; the sequence is MFGEGNKPTE…EDSKPKWNDW (94 aa). Positions 25 to 34 are enriched in polar residues; sequence PNASKNQYQG. The chain crosses the membrane as a helical span at residues 95–115; the sequence is PFTIFFAGCVIAFIVVAAITL. The Extracellular segment spans residues 116 to 142; the sequence is RAWSQNSSSQGSGVYDGANTGTLTTNS. N-linked (GlcNAc...) asparagine glycosylation is present at N121. A helical membrane pass occupies residues 143 to 163; sequence AIMLAISCIIAFVFSIIGIVL. Residues 164–169 are Cytoplasmic-facing; it reads ARMFPK. The chain crosses the membrane as a helical span at residues 170–190; sequence FFIIAGILFNIIAGLATAIMY. The Extracellular segment spans residues 191–192; that stretch reads LS. The chain crosses the membrane as a helical span at residues 193-213; that stretch reads LKYYSAGIVFLVFTAICALFY. The Cytoplasmic portion of the chain corresponds to 214 to 241; sequence WRMRHRIPFTVAVLKTVMDVMKSYPQTW. Residues 242–262 form a helical membrane-spanning segment; it reads FVTLIGSIIATAFSILFSAVI. The Extracellular segment spans residues 263-287; it reads VATYMKYDDKANNPGCSTNGGSCSN. A helical membrane pass occupies residues 288–308; it reads AKLIGLLVLVFFCGYYIAEVI. Over 309-349 the chain is Cytoplasmic; sequence RNVIHCTVSGIFGAWYYFSKSDQGMPKWPGFGALKRSLTYS. The chain crosses the membrane as a helical span at residues 350–370; that stretch reads FGSICFGSLIVTIIETLKAVL. Residues 371 to 385 lie on the Extracellular side of the membrane; the sequence is RLAVDGVMGGGGADN. A helical transmembrane segment spans residues 386 to 406; it reads GWMQCLALIANWIFSFLEWLA. Over 407–450 the chain is Cytoplasmic; the sequence is RYFNHYAYVFIALYGKPYLRAAKETWYMLREKGIDALINDNLVN. A helical transmembrane segment spans residues 451 to 471; the sequence is VALSFFTLFTCYITTLFAYLY. Over 472–484 the chain is Extracellular; sequence LRYTDPNYNDNNN. The helical transmembrane segment at 485-505 threads the bilayer; sequence FTPALMAFAFVIAMEICNVIT. Topologically, residues 506–553 are cytoplasmic; the sequence is ETIRSGTATFFVALGNDPEVFHLSYPERFDEIFRAYPEVLKKLSHQNV.

It belongs to the CTL (choline transporter-like) family.

The protein localises to the cell membrane. Its function is as follows. Probably involved in transport through the plasma membrane. This chain is Protein PNS1 (PNS1), found in Kluyveromyces lactis (strain ATCC 8585 / CBS 2359 / DSM 70799 / NBRC 1267 / NRRL Y-1140 / WM37) (Yeast).